The sequence spans 457 residues: MPFTFQIGNHSCQISERYLRDIIDNKREHVFSTCEKFIDFFRNIFTRRSLISDYREIYNLLCQKKEHPDIKGPFSPGPFSKRDEDCTRWRPLLGYIKLIDASRPETIDKYTVEVLAHQENMLLLQMFYDGVLVTETECSERCVDFLKETMFNYNNGEITLAALGNDNLPPSEAGSNGIYEAFEQRLIDFLTTPATASGYESGAIDQTDASQPAAIEAFINSPEFQKNIRMRDIEKNKIGSGSYGTVYRLHDDFVVKIPVNERGIKVDVNSPEHRNCHPDRVSKYLNMANDDKNFSRSAIMNINGKDVTVLVSKYIQGQEFDVEDEDNYRMAEALLKSRGVYMHDINILGNILVKEGVLFFVDGDQIVLSQESRQQRSVSLATRQLEEQIKAHHMIKLKRAETEGNTEDVEYYKSLITDLDALIGEEEQTPAPGRRFKLAAPEEGTLVAKVLKDELKK.

Lysine 256 is an ATP binding site.

The protein belongs to the protein kinase superfamily. In terms of processing, autophosphorylated.

Its subcellular location is the secreted. The protein localises to the host cytoplasm. In terms of biological role, effector proteins function to alter host cell physiology and promote bacterial survival in host tissues. This protein is a kinase, which is required for SPI-2 T3SS-dependent F-actin meshwork formation in infected host cells. This is Secreted effector kinase SteC (steC) from Salmonella typhimurium (strain LT2 / SGSC1412 / ATCC 700720).